A 208-amino-acid chain; its full sequence is Thymidylate kinase (208 aa).

An ATP-binding site is contributed by 10-17 (GIDGSGKS).

This sequence belongs to the thymidylate kinase family.

It catalyses the reaction dTMP + ATP = dTDP + ADP. In terms of biological role, phosphorylation of dTMP to form dTDP in both de novo and salvage pathways of dTTP synthesis. This chain is Thymidylate kinase, found in Jannaschia sp. (strain CCS1).